The chain runs to 300 residues: PAK4-inhibitor INKA2 (300 aa).

Disordered regions lie at residues 59–104 (GGTP…SSPK), 178–201 (LEKG…GQSR), and 230–288 (KEKP…LEPS). The segment covering 60 to 73 (GTPTFSCPESSQEQ) has biased composition (polar residues). Over residues 93 to 102 (SSSQPSFDSS) the composition is skewed to low complexity. An inka box region spans residues 140 to 183 (EPDDWTSTLMSRGRNRQPLVLGDNVFADLVGNWLDLPELEKGGE). Residues 246 to 256 (GRSKKVKKRSL) show a composition bias toward basic residues.

It belongs to the INKA family. In terms of assembly, interacts with PAK4. In terms of tissue distribution, enriched in the nervous system.

The protein localises to the nucleus. Its function is as follows. Inhibitor of the serine/threonine-protein kinase PAK4. Acts by binding PAK4 in a substrate-like manner, inhibiting the protein kinase activity. This chain is PAK4-inhibitor INKA2, found in Mus musculus (Mouse).